We begin with the raw amino-acid sequence, 585 residues long: Phosphomethylpyrimidine synthase (585 aa).

The span at 89–107 (RGDTESYEGRHVKPEDNGY) shows a compositional bias: basic and acidic residues. The tract at residues 89–116 (RGDTESYEGRHVKPEDNGYRSRNGSHQH) is disordered. Substrate contacts are provided by residues N199, M228, Y257, H293, 313-315 (SRG), 354-357 (DGLR), and E393. A Zn(2+)-binding site is contributed by H397. Y420 contributes to the substrate binding site. Residue H461 coordinates Zn(2+). 3 residues coordinate [4Fe-4S] cluster: C541, C544, and C549.

The protein belongs to the ThiC family. The cofactor is [4Fe-4S] cluster.

The catalysed reaction is 5-amino-1-(5-phospho-beta-D-ribosyl)imidazole + S-adenosyl-L-methionine = 4-amino-2-methyl-5-(phosphooxymethyl)pyrimidine + CO + 5'-deoxyadenosine + formate + L-methionine + 3 H(+). It functions in the pathway cofactor biosynthesis; thiamine diphosphate biosynthesis. In terms of biological role, catalyzes the synthesis of the hydroxymethylpyrimidine phosphate (HMP-P) moiety of thiamine from aminoimidazole ribotide (AIR) in a radical S-adenosyl-L-methionine (SAM)-dependent reaction. The chain is Phosphomethylpyrimidine synthase from Bacillus pumilus (strain SAFR-032).